The sequence spans 2335 residues: MSDGGVACMPLLNIMEKLPIVEKTTLCGGNESKTAATTENGHTSIATKVPESQPANKPSASSQPVKKKRIVKVIRKVVKRRPKQPQKQADEQLKDQPPSQVVQLPAESQLQIKEQDKKSEFKGGTSGVKEVENGGDSGFKDEVEEGELGTLKLHEDLENGEISPVKSLQKSEIEKGEIVGESWKKDEPTKGEFSHLKYHKGYVERRDFSADKNWKGGKEEREFRSWRDPSDEIEKGEFIPDRWQKMDTGKDDHSYIRSRRNGVDREKTWKYEYEYERTPPGGRFVNEDIYHQREFRSGLDRTTRISSKIVIEENLHKNEYNNSSNFVKEYSSTGNRLKRHGAEPDSIERKHSYADYGDYGSSKCRKLSDDCSRSLHSDHYSQHSAERLYRDSYPSKNSSLEKYPRKHQDASFPAKAFSDKHGHSPSRSDWSPHDRSRYHENRDRSPYARERSPYIFEKSSHARKRSPRDRRHHDYRRSPSYSEWSPHDRSRPSDRRDYIPNFMEDTQSDRNRRNGHREISRKSGVRERRDCQTGTELEIKHKYKESNGKESTSSSKELQGKNILYNNSLLVEKNSVCDSSKIPVPCATGKEPVQVGEAPTEELPSMEVDMDICDTPPHEPMASDSSLGKWFYLDYYGTEHGPARLSDLKALMEQGILFSDHMIKHSDNNRWLVNPPEAPGNLLEDIADTTEAVCIEQGAGDSLPELVSVRTLPDGKEIFVENREDFQIDMRVENLLDGRTITPGREFETLGEALKVNVEFEETRRCVTSEGVVGMFRPMKRAIEEFKSDDAYGSESDEIGSWFSGRWSCKGGDWIRQDEASQDRYYKKKIVLNDGFPLCLMQKSGHEDPRWHHKDDLYYPLSSSRLELPLWAFSVVDERNQTRGVKASLLSVVRLNSLVVNDQVPPIPDPRAKVRSKERCPSRPARPSPASSDSKRESVESHSQSTASTGQDSQGLWKTDTSVNTPRDRLCTVDDLQLHIGDWFYTDGAGQEQGPLSFSELQKLVEKGFIKSHSSVFRKSDKIWVPVTSITKSPETIAMLRGKTPALPSACQGLVVSETQDFKYSEMDTSLNSFHGVHPQFLGYFRGKLHQLVMKTFKSRDFSAAINDVVDSWIHARQPKKESEKYMYQSSELNSCYTKRARLMAGESGEDSEMEDTQMFQKDELTFEDLCGDLTFNIEGNRSAGTVGIYWGLLDGHALARVFHMLRYDVKSLAFASMTCRHWKATINSYKDISRQVDLSSLGPSCTDSRLRSIMNTYNKEKIDSIILVGCTNVTASMLEEILRLHPRISSVDITGCSQFGDLTVNYKNVSWLRCQNTRSGELHSRIRSLKQTTDVAKSKGLGGDTDDFGNLKDYFDRVEKRDSANQLFRRSLYKRSKLYDARRSSAILSRDARIRRWAIKKSEHGYKRVEEFLASSLRGIMKQNTFDFFALKVSQIEEKMKNGYYVSHGLRSVKEDISRMCREAIKDELMKSWQDGSGLSSATKYNKKLSKTVAEKKYMSRTSDTFGVNGASDYGEYASDREIKRRLSKLNRKSFSSESDTSSELSDNGKSDNYSSASASESESDIRSEGRSQDLRIEKYFTADDSFDSVTEEREWGARMTKASLVPPVTRKYEVIEKYAIVADEEEVQRKMRVSLPEDYGEKLNAQRNGIEELDMELPEVKEYKPRKLLGDEVLEQEVYGIDPYTHNLLLDSMPGELDWSLQDKHSFIEDVVLRTLNRQVRLFTGSGSTPMVFPLRPVIEELKESAREECDIRTMKMCQGVLKEIESRSDDKYVSYRKGLGVVCNKEGGFGEEDFVVEFLGEVYPVWKWFEKQDGIRSLQENKTDPAPEFYNIYLERPKGDADGYDLVVVDAMHMANYASRICHSCRPNCEAKVTAVDGHYQIGIYSVRAIEYGEEITFDYNSVTESKEEYEASVCLCGSQVCRGSYLNLTGEGAFQKVLKDWHGLLERHRLMLEACVLNSVSEEDYLELGRAGLGSCLLGGLPDWMIAYSARLVRFINFERTKLPEEILKHNLEEKRKYFSDIHLDVEKSDAEVQAEGVYNQRLQNLAVTLDKVRYVMRHVFGDPKNAPPPLERLTPEETVSFVWNGDGSLVDELLQSLSPHLEEGPLNELRSKIHGHDPSGSADVLKELQRSLLWLRDEIRDLPCTYKCRNDAAADLIHIYAYTKCFFKVREYQSFISSPVHISPLDLGAKYADKLGESIKEYRKTYGENYCLGQLIYWYNQTNTDPDLTLVKATRGCLSLPDVASFYAKAQKPSKHRVYGPKTVKTMVSQMSKQPQRPWPKDKIWTFKSTPRVFGSPMFDAVLNNSSSLDRELLQWLRNRRHVFQATWDS.

Disordered regions lie at residues Asn-30–Glu-142, Ser-332–Asp-355, Cys-371–Lys-556, and Asp-902–Thr-961. 2 stretches are compositionally biased toward polar residues: residues Glu-31–Ala-46 and Gln-53–Ser-62. The span at Val-65–Gln-84 shows a compositional bias: basic residues. A Nuclear localization signal 1 motif is present at residues Lys-67–Ile-74. Residues Pro-97 to Ile-112 are compositionally biased toward polar residues. 3 stretches are compositionally biased toward basic and acidic residues: residues His-340–Tyr-353, Cys-371–Arg-390, and Trp-430–Ser-452. A compositionally biased stretch (basic residues) spans His-461 to Tyr-475. Composition is skewed to basic and acidic residues over residues Ser-485–Tyr-498, Gln-507–Gly-548, and Pro-910–Pro-921. The short motif at Glu-527–Gly-534 is the Nuclear localization signal 2 element. Over residues Ser-922–Ser-932 the composition is skewed to low complexity. Residues Ser-941–Thr-961 show a composition bias toward polar residues. The Nuclear localization signal 3 motif lies at Ala-1382–Leu-1389. The segment at Asn-1532–Arg-1572 is disordered. A compositionally biased stretch (low complexity) spans Ser-1535–Ser-1547. One can recognise an SET domain in the interval Lys-1765–Asn-1904. Position 1868 (Cys-1868) interacts with Zn(2+). S-adenosyl-L-methionine is bound at residue Tyr-1903. One can recognise a Post-SET domain in the interval Glu-1914 to Leu-1930. Residues Cys-1918, Cys-1920, and Cys-1925 each coordinate Zn(2+).

It belongs to the class V-like SAM-binding methyltransferase superfamily. Histone-lysine methyltransferase family. TRX/MLL subfamily. As to expression, expressed in roots, leaves, stems and inflorescences.

The protein resides in the nucleus. It carries out the reaction L-lysyl(4)-[histone H3] + 3 S-adenosyl-L-methionine = N(6),N(6),N(6)-trimethyl-L-lysyl(4)-[histone H3] + 3 S-adenosyl-L-homocysteine + 3 H(+). Functionally, histone methyltransferase specifically required for trimethylation of 'Lys-4' of histone H3 (H3K4me3) and is crucial for both sporophyte and gametophyte development. Function as a diurnal 'writer' to counteract the nocturne 'eraser' demethylase activity of JMJ14 thus orchestrating the circadian rhythm of histone modifications (e.g. H3K4me3) and modulating the rhythmic expression of diurnal target genes; this mechanism relies also on the circadian clock oscillators CCA1 and LHY. The protein is Histone-lysine N-methyltransferase ATXR3 of Arabidopsis thaliana (Mouse-ear cress).